Reading from the N-terminus, the 380-residue chain is Succinyl-diaminopimelate desuccinylase (380 aa).

His69 provides a ligand contact to Zn(2+). Asp71 is an active-site residue. Asp102 is a Zn(2+) binding site. Glu135 (proton acceptor) is an active-site residue. Zn(2+) is bound by residues Glu136, Glu164, and His353.

The protein belongs to the peptidase M20A family. DapE subfamily. As to quaternary structure, homodimer. Requires Zn(2+) as cofactor. Co(2+) serves as cofactor.

It catalyses the reaction N-succinyl-(2S,6S)-2,6-diaminopimelate + H2O = (2S,6S)-2,6-diaminopimelate + succinate. It functions in the pathway amino-acid biosynthesis; L-lysine biosynthesis via DAP pathway; LL-2,6-diaminopimelate from (S)-tetrahydrodipicolinate (succinylase route): step 3/3. In terms of biological role, catalyzes the hydrolysis of N-succinyl-L,L-diaminopimelic acid (SDAP), forming succinate and LL-2,6-diaminopimelate (DAP), an intermediate involved in the bacterial biosynthesis of lysine and meso-diaminopimelic acid, an essential component of bacterial cell walls. This chain is Succinyl-diaminopimelate desuccinylase, found in Phenylobacterium zucineum (strain HLK1).